Here is a 293-residue protein sequence, read N- to C-terminus: HTH-type transcriptional regulator HdfR (293 aa).

Residues 1 to 58 enclose the HTH lysR-type domain; that stretch reads MDTELLKTFLEVSRTRHFGRAAESLYLTQSAVSFRIRQLENQLGANLFTRHRNNIRLT. The H-T-H motif DNA-binding region spans 18-37; it reads FGRAAESLYLTQSAVSFRIR.

This sequence belongs to the LysR transcriptional regulatory family.

Its function is as follows. Negatively regulates the transcription of the flagellar master operon flhDC by binding to the upstream region of the operon. This chain is HTH-type transcriptional regulator HdfR, found in Yersinia pseudotuberculosis serotype O:1b (strain IP 31758).